The following is a 26-amino-acid chain: AMP deaminase 1 (26 aa).

It belongs to the metallo-dependent hydrolases superfamily. Adenosine and AMP deaminases family. Homotetramer. It depends on Zn(2+) as a cofactor.

It catalyses the reaction AMP + H2O + H(+) = IMP + NH4(+). The protein operates within purine metabolism; IMP biosynthesis via salvage pathway; IMP from AMP: step 1/1. In terms of biological role, AMP deaminase plays a critical role in energy metabolism. The chain is AMP deaminase 1 (AMPD1) from Oryctolagus cuniculus (Rabbit).